Here is a 338-residue protein sequence, read N- to C-terminus: D-xylulose reductase (338 aa).

Cys-40, His-65, and Glu-151 together coordinate Zn(2+).

This sequence belongs to the zinc-containing alcohol dehydrogenase family. Homotetramer. Zn(2+) is required as a cofactor.

The catalysed reaction is xylitol + NAD(+) = D-xylulose + NADH + H(+). The polypeptide is D-xylulose reductase (Morganella morganii (Proteus morganii)).